The following is a 315-amino-acid chain: uncharacterized protein (315 aa).

A compositionally biased stretch (polar residues) spans 1 to 23; that stretch reads MSNTDALNTANTQITENVDTSSM. Residues 1-31 form a disordered region; the sequence is MSNTDALNTANTQITENVDTSSMKVEKTHDS.

This is an uncharacterized protein from Acanthamoeba polyphaga mimivirus (APMV).